We begin with the raw amino-acid sequence, 88 residues long: Phosphocarrier protein HPr (88 aa).

The HPr domain maps to 1-88 (MASKEFHIVV…ETMTKEGLAE (88 aa)). The active-site Pros-phosphohistidine intermediate is His-15. Residue Ser-46 is modified to Phosphoserine; by HPrK/P.

This sequence belongs to the HPr family.

The protein localises to the cytoplasm. Phosphorylation on Ser-46 inhibits the phosphoryl transfer from enzyme I to HPr. In terms of biological role, general (non sugar-specific) component of the phosphoenolpyruvate-dependent sugar phosphotransferase system (sugar PTS). This major carbohydrate active-transport system catalyzes the phosphorylation of incoming sugar substrates concomitantly with their translocation across the cell membrane. The phosphoryl group from phosphoenolpyruvate (PEP) is transferred to the phosphoryl carrier protein HPr by enzyme I. Phospho-HPr then transfers it to the PTS EIIA domain. P-Ser-HPr interacts with the catabolite control protein A (CcpA), forming a complex that binds to DNA at the catabolite response elements cre, operator sites preceding a large number of catabolite-regulated genes. Thus, P-Ser-HPr is a corepressor in carbon catabolite repression (CCR), a mechanism that allows bacteria to coordinate and optimize the utilization of available carbon sources. P-Ser-HPr also plays a role in inducer exclusion, in which it probably interacts with several non-PTS permeases and inhibits their transport activity. The protein is Phosphocarrier protein HPr (ptsH) of Lactococcus lactis subsp. lactis (strain IL1403) (Streptococcus lactis).